Here is a 152-residue protein sequence, read N- to C-terminus: 6,7-dimethyl-8-ribityllumazine synthase (152 aa).

5-amino-6-(D-ribitylamino)uracil is bound by residues F21, 55–57, and 79–81; these read AFE and CVI. A (2S)-2-hydroxy-3-oxobutyl phosphate-binding site is contributed by 84 to 85; it reads ST. H87 functions as the Proton donor in the catalytic mechanism. F112 is a 5-amino-6-(D-ribitylamino)uracil binding site. R126 serves as a coordination point for (2S)-2-hydroxy-3-oxobutyl phosphate.

Belongs to the DMRL synthase family. As to quaternary structure, forms an icosahedral capsid composed of 60 subunits, arranged as a dodecamer of pentamers.

The catalysed reaction is (2S)-2-hydroxy-3-oxobutyl phosphate + 5-amino-6-(D-ribitylamino)uracil = 6,7-dimethyl-8-(1-D-ribityl)lumazine + phosphate + 2 H2O + H(+). Its pathway is cofactor biosynthesis; riboflavin biosynthesis; riboflavin from 2-hydroxy-3-oxobutyl phosphate and 5-amino-6-(D-ribitylamino)uracil: step 1/2. Its function is as follows. Catalyzes the formation of 6,7-dimethyl-8-ribityllumazine by condensation of 5-amino-6-(D-ribitylamino)uracil with 3,4-dihydroxy-2-butanone 4-phosphate. This is the penultimate step in the biosynthesis of riboflavin. The chain is 6,7-dimethyl-8-ribityllumazine synthase from Staphylococcus saprophyticus subsp. saprophyticus (strain ATCC 15305 / DSM 20229 / NCIMB 8711 / NCTC 7292 / S-41).